The chain runs to 424 residues: uncharacterized protein (424 aa).

Position 259 is an N6-(pyridoxal phosphate)lysine (Lys259).

The protein belongs to the class-III pyridoxal-phosphate-dependent aminotransferase family. Pyridoxal 5'-phosphate serves as cofactor.

This is an uncharacterized protein from Archaeoglobus fulgidus (strain ATCC 49558 / DSM 4304 / JCM 9628 / NBRC 100126 / VC-16).